Reading from the N-terminus, the 841-residue chain is Envelope glycoprotein H (841 aa).

An N-terminal signal peptide occupies residues Met1–Ala17. Asn18, Asn45, and Asn217 each carry an N-linked (GlcNAc...) asparagine; by host glycan. Residues Asn18 to Gly802 lie on the Virion surface side of the membrane. The interaction with gL stretch occupies residues Asp246–Leu309. N-linked (GlcNAc...) asparagine; by host glycans are attached at residues Asn317, Asn499, Asn522, Asn760, and Asn783. A helical transmembrane segment spans residues Gln803–Gly823. Residues Trp824 to Thr841 lie on the Intravirion side of the membrane.

The protein belongs to the herpesviridae glycoprotein H family. Interacts with glycoprotein L (gL); this interaction is necessary for the correct processing and cell surface expression of gH. The heterodimer gH/gL seems to interact with gB trimers during fusion. N-glycosylated, O-glycosylated, and sialylated.

The protein localises to the virion membrane. It localises to the host cell membrane. Its subcellular location is the host endosome membrane. Functionally, the heterodimer glycoprotein H-glycoprotein L is required for the fusion of viral and plasma membranes leading to virus entry into the host cell. Following initial binding to host receptor, membrane fusion is mediated by the fusion machinery composed of gB and the heterodimer gH/gL. May also be involved in the fusion between the virion envelope and the outer nuclear membrane during virion morphogenesis. The polypeptide is Envelope glycoprotein H (Varicella-zoster virus (strain Dumas) (HHV-3)).